The sequence spans 66 residues: uncharacterized protein (66 aa).

The protein to M.jannaschii MJ0582.

This is an uncharacterized protein from Methanocaldococcus jannaschii (strain ATCC 43067 / DSM 2661 / JAL-1 / JCM 10045 / NBRC 100440) (Methanococcus jannaschii).